The chain runs to 399 residues: Glycerate 2-kinase (399 aa).

Lysine 48 is a substrate binding site.

Belongs to the glycerate kinase type-1 family. As to quaternary structure, homodimer. The cofactor is Mg(2+). It depends on Ni(2+) as a cofactor. Requires Mn(2+) as cofactor. Co(2+) is required as a cofactor. Ca(2+) serves as cofactor. The cofactor is Zn(2+). It depends on Sr(2+) as a cofactor.

The enzyme catalyses (R)-glycerate + ATP = (2R)-2-phosphoglycerate + ADP + H(+). In terms of biological role, catalyzes the ATP-dependent phosphorylation of D-glycerate to 2-phosphoglycerate. It can also utilize GTP, CTP, UTP, ADP, AMP or pyrophosphate as phosphate donor. The chain is Glycerate 2-kinase (gck) from Sulfurisphaera tokodaii (strain DSM 16993 / JCM 10545 / NBRC 100140 / 7) (Sulfolobus tokodaii).